Here is a 736-residue protein sequence, read N- to C-terminus: Elongation factor 2 (736 aa).

In terms of domain architecture, tr-type G spans 18 to 261; sequence EQVRNIGITA…MVVKFIPNPR (244 aa). GTP is bound by residues 27-34, 93-97, and 147-150; these read AHVDHGKT, DTPGH, and NKVD. Position 602 is a diphthamide (histidine 602).

Belongs to the TRAFAC class translation factor GTPase superfamily. Classic translation factor GTPase family. EF-G/EF-2 subfamily.

Its subcellular location is the cytoplasm. In terms of biological role, catalyzes the GTP-dependent ribosomal translocation step during translation elongation. During this step, the ribosome changes from the pre-translocational (PRE) to the post-translocational (POST) state as the newly formed A-site-bound peptidyl-tRNA and P-site-bound deacylated tRNA move to the P and E sites, respectively. Catalyzes the coordinated movement of the two tRNA molecules, the mRNA and conformational changes in the ribosome. This Staphylothermus marinus (strain ATCC 43588 / DSM 3639 / JCM 9404 / F1) protein is Elongation factor 2.